We begin with the raw amino-acid sequence, 413 residues long: Eukaryotic initiation factor 4A-14 (413 aa).

The Q motif signature appears at 40-68; that stretch reads DSFDAMGLQENLLRGIYAYGFEKPSAIQQ. The region spanning 71–241 is the Helicase ATP-binding domain; it reads IVPFCKGLDV…RKFMSKPVRI (171 aa). 84–91 contacts ATP; that stretch reads AQSGTGKT. Positions 189–192 match the DEAD box motif; sequence DEAD. Residues 252 to 413 form the Helicase C-terminal domain; sequence GIKQFYVNVD…ELPANVADLL (162 aa).

This sequence belongs to the DEAD box helicase family. eIF4A subfamily. EIF4F is a multi-subunit complex, the composition of which varies with external and internal environmental conditions. It is composed of at least EIF4A, EIF4E and EIF4G.

The catalysed reaction is ATP + H2O = ADP + phosphate + H(+). ATP-dependent RNA helicase which is a subunit of the eIF4F complex involved in cap recognition and is required for mRNA binding to ribosome. In the current model of translation initiation, eIF4A unwinds RNA secondary structures in the 5'-UTR of mRNAs which is necessary to allow efficient binding of the small ribosomal subunit, and subsequent scanning for the initiator codon. In Nicotiana tabacum (Common tobacco), this protein is Eukaryotic initiation factor 4A-14.